Reading from the N-terminus, the 283-residue chain is tRNA pseudouridine synthase A (283 aa).

The Nucleophile role is filled by aspartate 52. Tyrosine 148 contacts substrate.

Belongs to the tRNA pseudouridine synthase TruA family. In terms of assembly, homodimer.

The catalysed reaction is uridine(38/39/40) in tRNA = pseudouridine(38/39/40) in tRNA. In terms of biological role, formation of pseudouridine at positions 38, 39 and 40 in the anticodon stem and loop of transfer RNAs. The polypeptide is tRNA pseudouridine synthase A (Orientia tsutsugamushi (strain Ikeda) (Rickettsia tsutsugamushi)).